Reading from the N-terminus, the 204-residue chain is Urease accessory protein UreG (204 aa).

Gly-11–Thr-18 contacts GTP.

The protein belongs to the SIMIBI class G3E GTPase family. UreG subfamily. Homodimer. UreD, UreF and UreG form a complex that acts as a GTP-hydrolysis-dependent molecular chaperone, activating the urease apoprotein by helping to assemble the nickel containing metallocenter of UreC. The UreE protein probably delivers the nickel.

It localises to the cytoplasm. Its function is as follows. Facilitates the functional incorporation of the urease nickel metallocenter. This process requires GTP hydrolysis, probably effectuated by UreG. This Staphylococcus aureus (strain MSSA476) protein is Urease accessory protein UreG.